Here is a 294-residue protein sequence, read N- to C-terminus: NAD kinase (294 aa).

Catalysis depends on D73, which acts as the Proton acceptor. NAD(+) contacts are provided by residues 73–74 (DG), 147–148 (NE), H158, R175, D177, 188–193 (TAYSLS), and Q249.

Belongs to the NAD kinase family. The cofactor is a divalent metal cation.

The protein localises to the cytoplasm. The enzyme catalyses NAD(+) + ATP = ADP + NADP(+) + H(+). In terms of biological role, involved in the regulation of the intracellular balance of NAD and NADP, and is a key enzyme in the biosynthesis of NADP. Catalyzes specifically the phosphorylation on 2'-hydroxyl of the adenosine moiety of NAD to yield NADP. This is NAD kinase from Aeromonas salmonicida (strain A449).